Consider the following 421-residue polypeptide: Probable pectate lyase C (421 aa).

The first 19 residues, 1-19 (MQPLHTLLALLPLCRSTTA), serve as a signal peptide directing secretion. N-linked (GlcNAc...) asparagine glycosylation is found at N164 and N201. Residue R204 is part of the active site. In terms of domain architecture, EF-hand spans 257–292 (NENFHGYVENNYYDPDQDGTLNGNELGVSSSNYGGM). Residues D270, D272, D274, T276, and E281 each coordinate Ca(2+). Positions 353–376 (DFGGVGDLDGGETPTDTDGDGIPD) are disordered. A compositionally biased stretch (acidic residues) spans 367 to 376 (TDTDGDGIPD).

The protein belongs to the polysaccharide lyase 1 family. Ca(2+) serves as cofactor.

The protein resides in the secreted. It carries out the reaction Eliminative cleavage of (1-&gt;4)-alpha-D-galacturonan to give oligosaccharides with 4-deoxy-alpha-D-galact-4-enuronosyl groups at their non-reducing ends.. Its function is as follows. Pectinolytic enzyme consist of four classes of enzymes: pectin lyase, polygalacturonase, pectin methylesterase and rhamnogalacturonase. Among pectinolytic enzymes, pectin lyase is the most important in depolymerization of pectin, since it cleaves internal glycosidic bonds of highly methylated pectins. Favors pectate, the anion, over pectin, the methyl ester. The protein is Probable pectate lyase C (plyC) of Emericella nidulans (strain FGSC A4 / ATCC 38163 / CBS 112.46 / NRRL 194 / M139) (Aspergillus nidulans).